The sequence spans 2544 residues: Highly reducing polyketide synthase pkhB (2544 aa).

The Ketosynthase family 3 (KS3) domain occupies 9–438 (SEPIAIIGMS…GTNAHVILES (430 aa)). Residues Cys-182, His-317, and His-358 each act as for beta-ketoacyl synthase activity in the active site. The interval 566–876 (VFTGQVFRRS…PYWGCLVRDE (311 aa)) is malonyl-CoA:ACP transacylase (MAT) domain. The tract at residues 948–1082 (HELLGMPVAG…GMVGIEESAV (135 aa)) is N-terminal hotdog fold. Positions 948–1252 (HELLGMPVAG…VELAALGRGS (305 aa)) are dehydratase (DH) domain. In terms of domain architecture, PKS/mFAS DH spans 948–1254 (HELLGMPVAG…LAALGRGSSA (307 aa)). Residue His-980 is the Proton acceptor; for dehydratase activity of the active site. Residues 1095–1254 (YTRQPNPQDL…LAALGRGSSA (160 aa)) form a C-terminal hotdog fold region. Asp-1165 (proton donor; for dehydratase activity) is an active-site residue. The tract at residues 1398–1573 (SSLRQLSALL…FSGLDLEIYD (176 aa)) is methyltransferase (CMet) domain. An enoyl reductase (ER) domain region spans residues 1826–2142 (GHLGTLAFAE…TGDQMGKVVL (317 aa)). The tract at residues 2169–2356 (ASYLIVGGVG…GVAIDLGPIS (188 aa)) is ketoreductase (KR) domain. Residues 2462-2539 (EGARLIGAAI…ALAGLVAEKS (78 aa)) enclose the Carrier domain. Residue Ser-2499 is modified to O-(pantetheine 4'-phosphoryl)serine.

The cofactor is pantetheine 4'-phosphate.

It participates in secondary metabolite biosynthesis. Its function is as follows. Highly reducing polyketide synthase; part of the pkh gene cluster that mediates the biosynthesis of 2,4-dihydroxy-6-[(3E,5E,7E)-2-oxonona-3,5,7-trienyl]benzaldehyde. The highly reducing polyketide synthase pkhB first produces the (2E,4E,6E)-octa-2,4,6-trienyl strater unit for the non-reducing polyketide synthase pkhA. This octatrienoyl starter is then loaded onto the SAT domain of the NR-PKS pkhA to be condensed with 4 malonyl-CoA units to yield 2,4-dihydroxy-6-[(3E,5E,7E)-2-oxonona-3,5,7-trienyl]benzaldehyde. In Emericella nidulans (strain FGSC A4 / ATCC 38163 / CBS 112.46 / NRRL 194 / M139) (Aspergillus nidulans), this protein is Highly reducing polyketide synthase pkhB.